The chain runs to 335 residues: NmrA-like family domain-containing oxidoreductase ptmS (335 aa).

NADP(+) is bound by residues 12–17 (GATGNQ), 39–43 (RDPNS), 60–61 (DG), 81–88 (INSDDPVF), Lys139, and 163–166 (FLEN). An interaction with ASS1 region spans residues 161–206 (GYFLENFLFKQGAFIMGGFPWETDAEGYLTWKVPYWGGEEQIPFLS).

The protein belongs to the NmrA-type oxidoreductase family.

Its pathway is secondary metabolite biosynthesis. Functionally, nmrA-like family domain-containing oxidoreductase; part of the gene cluster that mediates the biosynthesis of the indole diterpenes penitrems. The geranylgeranyl diphosphate (GGPP) synthase ptmG catalyzes the first step in penitrem biosynthesis via conversion of farnesyl pyrophosphate and isopentyl pyrophosphate into geranylgeranyl pyrophosphate (GGPP). Condensation of indole-3-glycerol phosphate with GGPP by the prenyl transferase ptmC then forms 3-geranylgeranylindole (3-GGI). Epoxidation by the FAD-dependent monooxygenase ptmM leads to a epoxidized-GGI that is substrate of the terpene cyclase ptmB for cyclization to yield paspaline. Paspaline is subsequently converted to 13-desoxypaxilline by the cytochrome P450 monooxygenase ptmP, the latter being then converted to paxilline by the cytochrome P450 monooxygenase ptmQ. Paxilline is converted to beta-paxitriol via C-10 ketoreduction by the short-chain dehydrogenase ptmH which can be monoprenylated at the C-20 by the indole diterpene prenyltransferase ptmD. A two-step elimination (acetylation and elimination) process performed by the O-acetyltransferase ptmV and ptmI leads to the production of the prenylated form of penijanthine. The FAD-linked oxidoreductase ptmO then converts the prenylated form of penijanthine into PC-M5 which is in turn transformed into PC-M4 by the aromatic dimethylallyltransferase ptmE. Five sequential oxidative transformations performed by the cytochrome P450 monooxygenases ptmK, ptmU, ptmL, ptmN and ptmJ yield the various penitrem compounds. PtmK, ptmU and ptmM are involved in the formation of the key bicyclic ring of penitrem C via the formation of the intermediates secopenitrem D and penitrem D. PtmL catalyzes the epoxidation of penitrem D and C to yield penitrem B and F, respectively. PtmJ catalyzes the last benzylic hydroxylation to convert penitrem B to prenitrem E and penitrem F to penitrem A. The sequence is that of NmrA-like family domain-containing oxidoreductase ptmS from Penicillium ochrochloron.